The chain runs to 1031 residues: Formin-binding protein 4 (1031 aa).

3 disordered regions span residues 1 to 102, 116 to 143, and 166 to 205; these read MMGK…TTRP, AYAD…NQAT, and APVV…QTPG. Serine 19 bears the Phosphoserine mark. Low complexity-rich tracts occupy residues 41 to 73 and 83 to 92; these read DSTA…APED and VVEVPNVVQN. Phosphoserine is present on residues serine 120, serine 125, and serine 128. Over residues 134–143 the composition is skewed to polar residues; sequence SKEANGNQAT. Position 176 is a phosphothreonine (threonine 176). Positions 190–203 are enriched in polar residues; the sequence is LSPTASNGSDTAQT. The WW 1 domain maps to 218–252; sequence EIEMGDWQEVWDENTGCYYYWNTQTNEVTWELPQY. Residue lysine 294 is modified to N6-acetyllysine. Lysine 305 is covalently cross-linked (Glycyl lysine isopeptide (Lys-Gly) (interchain with G-Cter in SUMO1)). Lysine 339 participates in a covalent cross-link: Glycyl lysine isopeptide (Lys-Gly) (interchain with G-Cter in SUMO2). Lysine 352 participates in a covalent cross-link: Glycyl lysine isopeptide (Lys-Gly) (interchain with G-Cter in SUMO1); alternate. Lysine 352 participates in a covalent cross-link: Glycyl lysine isopeptide (Lys-Gly) (interchain with G-Cter in SUMO2); alternate. The disordered stretch occupies residues 355-518; the sequence is DPVSETKETS…KETEVEESSE (164 aa). A compositionally biased stretch (acidic residues) spans 400–414; sequence ESEEEEEEEEQDTLE. Positions 418-430 are enriched in basic and acidic residues; the sequence is ALERKKAELRALE. Serine 435, serine 440, serine 443, serine 446, and serine 450 each carry phosphoserine. The segment covering 436-450 has biased composition (polar residues); the sequence is VSGSSPRSDISQPAS. Residues 457–466 are compositionally biased toward basic residues; that stretch reads IMSKRGKWKM. A compositionally biased stretch (low complexity) spans 469-482; the sequence is RATSPESTSRSSSK. A phosphoserine mark is found at serine 472, serine 507, and serine 516. The span at 499–518 shows a compositional bias: basic and acidic residues; sequence DSEKIDEISDKETEVEESSE. Lysine 527 is covalently cross-linked (Glycyl lysine isopeptide (Lys-Gly) (interchain with G-Cter in SUMO1); alternate). A Glycyl lysine isopeptide (Lys-Gly) (interchain with G-Cter in SUMO2); alternate cross-link involves residue lysine 527. One can recognise a WW 2 domain in the interval 603–637; the sequence is NATPKGWSCHWDRDHRRYFYVNEQSGESQWEFPDG. 3 disordered regions span residues 629–681, 712–813, and 900–994; these read ESQW…SLCK, PLPL…VQRS, and PAQA…RIEE. Residues 643–663 are compositionally biased toward basic and acidic residues; sequence SQTKEVRDESLPKLTVKDKTC. The span at 664 to 677 shows a compositional bias: polar residues; sequence TDPNSTESSENPTG. The segment covering 712–741 has biased composition (pro residues); it reads PLPLEMPPPPPPPPESPPPPPPPPPPPPPL. Positions 742–757 are enriched in acidic residues; sequence EDGEIQEVEMEDEGSE. A compositionally biased stretch (polar residues) spans 771–794; sequence KPSTQTTAVTSQSLVDSTASSPPS. Pro residues predominate over residues 913-939; the sequence is VEPPPPPPPPPTPTPPPPPPAPKVPPP. Basic residues predominate over residues 943–955; that stretch reads RKGKKDKAKKSKT. Positions 971-984 are enriched in acidic residues; it reads LDEEDNSSSSEEDR. 3 positions are modified to phosphoserine: serine 977, serine 978, and serine 979. Positions 985-994 are enriched in basic and acidic residues; that stretch reads ESTAQKRIEE.

As to quaternary structure, binds FMN1. Interacts with the Arg/Gly-rich-flanked Pro-rich regions of KHDRBS1/SAM68. Arginine methylation in these regions has no effect on this binding. As to expression, ubiquitous. Highest levels in spleen and thymus.

The sequence is that of Formin-binding protein 4 (Fnbp4) from Mus musculus (Mouse).